The primary structure comprises 370 residues: Probable pectin lyase E (370 aa).

An intrachain disulfide couples Cys75 to Cys96. Arg245 is an active-site residue. N-linked (GlcNAc...) asparagine glycosylation occurs at Asn307. A disulfide bridge links Cys311 with Cys319.

It belongs to the polysaccharide lyase 1 family.

The protein resides in the secreted. It catalyses the reaction Eliminative cleavage of (1-&gt;4)-alpha-D-galacturonan methyl ester to give oligosaccharides with 4-deoxy-6-O-methyl-alpha-D-galact-4-enuronosyl groups at their non-reducing ends.. Pectinolytic enzymes consist of four classes of enzymes: pectin lyase, polygalacturonase, pectin methylesterase and rhamnogalacturonase. Among pectinolytic enzymes, pectin lyase is the most important in depolymerization of pectin, since it cleaves internal glycosidic bonds of highly methylated pectins. The protein is Probable pectin lyase E (pelE) of Aspergillus niger.